Here is a 350-residue protein sequence, read N- to C-terminus: Cyclin-O (350 aa).

Residues 1-89 (MVTPCPTSPS…GSPLPGPAQP (89 aa)) are disordered. Residues 28-42 (PVKKSRRPRLRRKQP) show a composition bias toward basic residues. Ser-81 carries the post-translational modification Phosphoserine.

Belongs to the cyclin family. In terms of tissue distribution, present in respiratory cells (at protein level).

Its subcellular location is the cytoplasm. It is found in the nucleus. It localises to the nucleolus. Its function is as follows. Specifically required for generation of multiciliated cells, possibly by promoting a cell cycle state compatible with centriole amplification and maturation. Acts downstream of MCIDAS to promote mother centriole amplification and maturation in preparation for apical docking. The sequence is that of Cyclin-O from Homo sapiens (Human).